A 104-amino-acid chain; its full sequence is Large ribosomal subunit protein uL24 (104 aa).

It belongs to the universal ribosomal protein uL24 family. Part of the 50S ribosomal subunit.

One of two assembly initiator proteins, it binds directly to the 5'-end of the 23S rRNA, where it nucleates assembly of the 50S subunit. In terms of biological role, one of the proteins that surrounds the polypeptide exit tunnel on the outside of the subunit. The sequence is that of Large ribosomal subunit protein uL24 from Clostridium botulinum (strain Alaska E43 / Type E3).